A 679-amino-acid chain; its full sequence is MEGNLISMREDHSFHVRYRMEASCLELALEGERLCKSGDCRAGVSFFEAAVQVGTEDLKTLSAIYSQLGNAYFYLHDYAKALEYHHHDLTLARTIGDQLGEAKASGNLGNTLKVLGNFDEAIVCCQRHLDISRELNDKVGEARALYNLGNVYHAKGKSFGCPGPQDTGEFPEDVRNALQAAVDLYEENLSLVTALGDRAAQGRAFGNLGNTHYLLGNFRDAVIAHEQRLLIAKEFGDKAAERRAYSNLGNAYIFLGEFETASEYYKKTLLLARQLKDRAVEAQSCYSLGNTYTLLQDYEKAIDYHLKHLAIAQELKDRIGEGRACWSLGNAYTALGNHDQAMHFAEKHLEISREVGDKSGELTARLNLSDLQMVLGLSYSTNNSMMSENIEIDGSLHGAGAKLGRRHSMENLELMKLTPEKVPNWNSEILAKQKPLIAKPSAKLLFVNRLKGKKYKSGSACTKVLQDASNSVDHRAPRSQKKISSDTIGDEGFFDLLRRFQSNRMDDQRCHLQGNCRTTSTAAASATPKLMKAPSVSVVSPNTDEFLDLLASSQSRRLDDQRASFSNLPGLRLTKGNSPSVLERLMTNDKKEPDEDFFDILVKCQGSRLDDQRCAPPSAATKGPTVPDEDFFSLILRSQAKRMDEQRVLLQRDPNRDSEFGLKELLQNNALLEFKHSGK.

The important for interaction with NUMA1; INSC and FRMPD1 stretch occupies residues 22–357 (ASCLELALEG…HLEISREVGD (336 aa)). TPR repeat units follow at residues 24–57 (CLELALEGERLCKSGDCRAGVSFFEAAVQVGTED), 62–95 (SAIYSQLGNAYFYLHDYAKALEYHHHDLTLARTI), 102–135 (AKASGNLGNTLKVLGNFDEAIVCCQRHLDISREL), 142–184 (ARAL…AVDL), 202–235 (GRAFGNLGNTHYLLGNFRDAVIAHEQRLLIAKEF), 242–275 (RRAYSNLGNAYIFLGEFETASEYYKKTLLLARQL), 282–315 (AQSCYSLGNTYTLLQDYEKAIDYHLKHLAIAQEL), and 322–355 (GRACWSLGNAYTALGNHDQAMHFAEKHLEISREV). Phosphoserine occurs at positions 408 and 484. The residue at position 487 (Thr-487) is a Phosphothreonine. The 23-residue stretch at 490-512 (DEGFFDLLRRFQSNRMDDQRCHL) folds into the GoLoco 1 domain. Residues Ser-540 and Ser-564 each carry the phosphoserine modification. GoLoco domains are found at residues 543-565 (TDEFLDLLASSQSRRLDDQRASF), 594-616 (DEDFFDILVKCQGSRLDDQRCAP), and 628-650 (DEDFFSLILRSQAKRMDEQRVLL). Residues Arg-608, Arg-613, Arg-642, and Arg-647 each coordinate GDP.

Belongs to the GPSM family. In terms of assembly, interacts with the dynein-dynactin complex; this interaction is inhibited in a PLK1-dependent manner. Part of a spindle orientation complex at least composed of GNAI1, GPSM2 and NUMA1. Interacts with LLGL2. Interacts (via TPR repeat region) with INSC/inscuteable. Interacts (via TPR repeat region) with NUMA1 (via C-terminus); this interaction is direct, inhibited in a PLK1-dependent manner and promotes spindle pole organization. INSC and NUMA1 compete for the same binding site, but INSC has higher affinity and can displace NUMA1 (in vitro). Interacts with GNAI2. Interacts (via GoLoco domains) with the GDP-bound form of GNAI1 and GNAI3; has much lower affinity for the GTP-bound form. Interaction with GDP-bound GNAI3 strongly enhances the affinity for NUMA1. Interacts (via TPR repeat region) with FRMPD1. INSC and FRMPD1 compete for the same binding site, but INSC has higher affinity and can displace FRMPD1 (in vitro). Interacts (via TPR repeat region) with FRMPD4. Identified in a complex with INSC and F2RL2/Par3. Interacts with TASOR. Detected in brain and liver (at protein level). Detected in brain, spleen, liver and testis, and at lower levels in heart, lung and kidney. Enriched in the ventricular zone of the developing central nervous systems. Expressed in proximal colon, ileum, ovary, Sertoli cells of the testis and granular cells within the cerebellum.

It localises to the cytoplasm. It is found in the cell cortex. The protein localises to the cytoskeleton. Its subcellular location is the spindle pole. The protein resides in the lateral cell membrane. Its function is as follows. Plays an important role in mitotic spindle pole organization via its interaction with NUMA1. Required for cortical dynein-dynactin complex recruitment during metaphase. Plays a role in metaphase spindle orientation. Plays an important role in asymmetric cell divisions. Has guanine nucleotide dissociation inhibitor (GDI) activity towards G(i) alpha proteins, such as GNAI1 and GNAI3, and thereby regulates their activity. The polypeptide is G-protein-signaling modulator 2 (Gpsm2) (Mus musculus (Mouse)).